We begin with the raw amino-acid sequence, 360 residues long: Ribosomal RNA large subunit methyltransferase M (360 aa).

Residues Ser187, 220–223 (CPGG), Asp239, Asp259, and Asp276 contribute to the S-adenosyl-L-methionine site. Catalysis depends on Lys305, which acts as the Proton acceptor.

The protein belongs to the class I-like SAM-binding methyltransferase superfamily. RNA methyltransferase RlmE family. RlmM subfamily. Monomer.

It is found in the cytoplasm. The enzyme catalyses cytidine(2498) in 23S rRNA + S-adenosyl-L-methionine = 2'-O-methylcytidine(2498) in 23S rRNA + S-adenosyl-L-homocysteine + H(+). In terms of biological role, catalyzes the 2'-O-methylation at nucleotide C2498 in 23S rRNA. The chain is Ribosomal RNA large subunit methyltransferase M from Shewanella halifaxensis (strain HAW-EB4).